The primary structure comprises 302 residues: N-acetylmuramic acid 6-phosphate etherase (302 aa).

In terms of domain architecture, SIS spans 58 to 221 (IGEAFLNGGR…STGAMVKTGK (164 aa)). Glu86 acts as the Proton donor in catalysis. The active site involves Glu117.

This sequence belongs to the GCKR-like family. MurNAc-6-P etherase subfamily. Homodimer.

It catalyses the reaction N-acetyl-D-muramate 6-phosphate + H2O = N-acetyl-D-glucosamine 6-phosphate + (R)-lactate. It participates in amino-sugar metabolism; N-acetylmuramate degradation. Specifically catalyzes the cleavage of the D-lactyl ether substituent of MurNAc 6-phosphate, producing GlcNAc 6-phosphate and D-lactate. This is N-acetylmuramic acid 6-phosphate etherase from Clostridium botulinum (strain Hall / ATCC 3502 / NCTC 13319 / Type A).